Here is a 271-residue protein sequence, read N- to C-terminus: Regulatory protein RecX (271 aa).

Belongs to the RecX family.

It is found in the cytoplasm. Functionally, modulates RecA activity. The sequence is that of Regulatory protein RecX from Lactobacillus delbrueckii subsp. bulgaricus (strain ATCC BAA-365 / Lb-18).